The chain runs to 263 residues: Heat-labile enterotoxin IIB, A chain (263 aa).

The N-terminal stretch at 1–20 (MAKVISFFISLFLISFPLYA) is a signal peptide. 26–39 (ADSRTPDEVRRSGG) lines the NAD(+) pocket. Residue Glu-130 is part of the active site. Cys-205 and Cys-217 are oxidised to a cystine.

Belongs to the enterotoxin A family. In terms of assembly, heterohexamer of one A chain and of five B chains.

Functionally, the biological activity of the toxin is produced by the A chain, which activates intracellular adenyl cyclase. The polypeptide is Heat-labile enterotoxin IIB, A chain (Escherichia coli).